Here is a 337-residue protein sequence, read N- to C-terminus: Holliday junction branch migration complex subunit RuvB (337 aa).

Positions 4–186 (ADRLIAADNP…FGIVQRLEYY (183 aa)) are large ATPase domain (RuvB-L). ATP-binding positions include isoleucine 25, arginine 26, glycine 67, lysine 70, threonine 71, threonine 72, 133–135 (EDY), arginine 176, tyrosine 186, and arginine 223. Position 71 (threonine 71) interacts with Mg(2+). Residues 187–257 (KVEDLQHIVQ…IADKALNMLD (71 aa)) form a small ATPAse domain (RuvB-S) region. Positions 260–337 (VRGFDYMDRK…LHFGIDKPDK (78 aa)) are head domain (RuvB-H). DNA contacts are provided by arginine 296, arginine 315, and arginine 320.

The protein belongs to the RuvB family. In terms of assembly, homohexamer. Forms an RuvA(8)-RuvB(12)-Holliday junction (HJ) complex. HJ DNA is sandwiched between 2 RuvA tetramers; dsDNA enters through RuvA and exits via RuvB. An RuvB hexamer assembles on each DNA strand where it exits the tetramer. Each RuvB hexamer is contacted by two RuvA subunits (via domain III) on 2 adjacent RuvB subunits; this complex drives branch migration. In the full resolvosome a probable DNA-RuvA(4)-RuvB(12)-RuvC(2) complex forms which resolves the HJ.

It localises to the cytoplasm. The catalysed reaction is ATP + H2O = ADP + phosphate + H(+). In terms of biological role, the RuvA-RuvB-RuvC complex processes Holliday junction (HJ) DNA during genetic recombination and DNA repair, while the RuvA-RuvB complex plays an important role in the rescue of blocked DNA replication forks via replication fork reversal (RFR). RuvA specifically binds to HJ cruciform DNA, conferring on it an open structure. The RuvB hexamer acts as an ATP-dependent pump, pulling dsDNA into and through the RuvAB complex. RuvB forms 2 homohexamers on either side of HJ DNA bound by 1 or 2 RuvA tetramers; 4 subunits per hexamer contact DNA at a time. Coordinated motions by a converter formed by DNA-disengaged RuvB subunits stimulates ATP hydrolysis and nucleotide exchange. Immobilization of the converter enables RuvB to convert the ATP-contained energy into a lever motion, pulling 2 nucleotides of DNA out of the RuvA tetramer per ATP hydrolyzed, thus driving DNA branch migration. The RuvB motors rotate together with the DNA substrate, which together with the progressing nucleotide cycle form the mechanistic basis for DNA recombination by continuous HJ branch migration. Branch migration allows RuvC to scan DNA until it finds its consensus sequence, where it cleaves and resolves cruciform DNA. The sequence is that of Holliday junction branch migration complex subunit RuvB from Aliivibrio fischeri (strain ATCC 700601 / ES114) (Vibrio fischeri).